We begin with the raw amino-acid sequence, 293 residues long: AM-toxin biosynthesis protein 14 (293 aa).

The next 5 membrane-spanning stretches (helical) occupy residues Ser33 to Ile53, Ile73 to Leu93, Gly148 to Trp168, Leu183 to Leu203, and Val221 to Thr241.

Its subcellular location is the membrane. It participates in mycotoxin biosynthesis. Functionally, part of the gene clusters that mediate the biosynthesis of AM-toxins, host-selective toxins (HSTs) causing Alternaria blotch on apple, a worldwide distributed disease. AM-toxins are cyclic depsipeptides containing the 3 residues 2-hydroxy-isovaleric acid (2-HIV), dehydroalanine, L-alanine which are common for all 3 AM-toxins I to III. The fourth precursor is L-alpha-amino-methoxyphenyl-valeric acid (L-Amv) for AM-toxin I, L-alpha-amino-phenyl-valeric acid (L-Apv) for AM-toxin II, and L-alpha-amino-hydroxyphenyl-valeric acid (L-Ahv) for AM-toxin III. AM-toxins have two target sites for affecting susceptible apple cells; they cause invagination of the plasma membrane and electrolyte loss and chloroplast disorganization. The non-ribosomal peptide synthetase AMT1 contains 4 catalytic modules and is responsible for activation of each residue in AM-toxin. The aldo-keto reductase AMT2 catalyzes the conversion of 2-keto-isovaleric acid (2-KIV) to 2-hydroxy-isovaleric acid (2-HIV), one of the precursor residues incorporated by AMT1 during AM-toxin biosynthesis, by reduction of its ketone to an alcohol. The cytochrome P450 monooxygenase AMT3 and the thioesterase AMT4 are also important for AM-toxin production, but their exact function within the AM-toxin biosynthesis are not known yet. Up to 21 proteins (including AMT1 to AMT4) are predicted to be involved in AM-toxin biosynthesis since their expression ishighly up-regulated in AM-toxin-producing cultures. This Alternaria alternata (Alternaria rot fungus) protein is AM-toxin biosynthesis protein 14.